A 374-amino-acid chain; its full sequence is MSVPAFIDVTEEDQAAELRAYLKSKGAEISEENSEGGLHIDLAQIIEACDVCLKDDDKDVESSMNSVVSLVLILETDKQEALIESLCEKLVKSREGERPSLRLQLLSNLFHGMDKSIPARYTVYCALIKVAATCGGIVYIPTDLDQVRKWISDWNLSTEKKHVVLRLLYEALVDCKKSDEAAKVMVELLGSYTDDNASQARLDAHKCIVRALKDPKAFLLDHLLALKPVKFLEGELIHDLLTIFVSAKLSSYVKFYQNNKDFIDSLGLSHEQNMEKMRLLTFMGMAVDNKEISFDTIQQELQMGADEVEAFIIDAVKTKMVYCKIDQTQKKVVVSHSTHRTFGKQQWQQLYDILNTWKLNLNKVKNSLYSISDA.

Residues 180-339 (EAAKVMVELL…KKVVVSHSTH (160 aa)) enclose the PCI domain.

This sequence belongs to the eIF-3 subunit M family. In terms of assembly, component of the eukaryotic translation initiation factor 3 (eIF-3) complex, which is composed of 13 subunits: eif3a, eif3b, eif3c, eif3d, eif3e, eif3f, eif3g, eif3h, eif3i, eif3j, eif3k, eif3l and eif3m.

The protein localises to the cytoplasm. Functionally, component of the eukaryotic translation initiation factor 3 (eIF-3) complex, which is involved in protein synthesis of a specialized repertoire of mRNAs and, together with other initiation factors, stimulates binding of mRNA and methionyl-tRNAi to the 40S ribosome. The eIF-3 complex specifically targets and initiates translation of a subset of mRNAs involved in cell proliferation. The sequence is that of Eukaryotic translation initiation factor 3 subunit M (eif3m) from Xenopus laevis (African clawed frog).